We begin with the raw amino-acid sequence, 114 residues long: Iron-sulfur cluster insertion protein ErpA (114 aa).

The iron-sulfur cluster site is built by Cys42, Cys106, and Cys108.

This sequence belongs to the HesB/IscA family. As to quaternary structure, homodimer. It depends on iron-sulfur cluster as a cofactor.

Required for insertion of 4Fe-4S clusters for at least IspG. This is Iron-sulfur cluster insertion protein ErpA from Sodalis glossinidius (strain morsitans).